The chain runs to 281 residues: NADH-cytochrome b5 reductase 1 (281 aa).

A helical transmembrane segment spans residues 2–22 (VPGKFIFTATFVLLCTIIAVV). In terms of domain architecture, FAD-binding FR-type spans 37-141 (EKLQEFPLVA…RGPKGFYHYQ (105 aa)). FAD is bound by residues 121 to 136 (AQLNIGDKIKVRGPKG) and 147 to 179 (EIGMIAGGTGIAPMYQIMKSIFANDSDKTKVSL).

The protein belongs to the flavoprotein pyridine nucleotide cytochrome reductase family. In terms of assembly, monomer. Component of the 2-(3-amino-3-carboxypropyl)histidine synthase complex composed of DPH1, DPH2, DPH3 and a NADH-dependent reductase, predominantly CBR1. FAD serves as cofactor.

The protein localises to the mitochondrion outer membrane. It carries out the reaction 2 Fe(III)-[cytochrome b5] + NADH = 2 Fe(II)-[cytochrome b5] + NAD(+) + H(+). The enzyme catalyses 2 Fe(3+)-[Dph3] + NADH = 2 Fe(2+)-[Dph3] + NAD(+) + H(+). Its pathway is protein modification; peptidyl-diphthamide biosynthesis. In terms of biological role, NADH-dependent reductase for DPH3 and cytochrome b5. Required for the first step of diphthamide biosynthesis, a post-translational modification of histidine which occurs in elongation factor 2. DPH1 and DPH2 transfer a 3-amino-3-carboxypropyl (ACP) group from S-adenosyl-L-methionine (SAM) to a histidine residue, the reaction is assisted by a reduction system comprising DPH3 and a NADH-dependent reductase, predominantly CBR1. By reducing DPH3, also involved in the formation of the tRNA wobble base modification mcm5s 2U (5-methoxycarbonylmethyl-2-thiouridine), mediated by the elongator complex. The cytochrome b5/NADH cytochrome b5 reductase electron transfer system supports the catalytic activity of several sterol biosynthetic enzymes. This is NADH-cytochrome b5 reductase 1 (CBR1) from Kluyveromyces lactis (strain ATCC 8585 / CBS 2359 / DSM 70799 / NBRC 1267 / NRRL Y-1140 / WM37) (Yeast).